A 247-amino-acid polypeptide reads, in one-letter code: Adenosylcobinamide-GDP ribazoletransferase (247 aa).

4 helical membrane passes run 34–54 (IITFPLIGLLLGAISGLVFMV), 59–79 (CGVPLAALFSVLVLALMTGGF), 113–133 (GGLALIFVVLAKILVLSELAL), and 194–214 (VLLPGMHGVAAMVVTMVAIFI).

The protein belongs to the CobS family. It depends on Mg(2+) as a cofactor.

It localises to the cell inner membrane. It catalyses the reaction alpha-ribazole + adenosylcob(III)inamide-GDP = adenosylcob(III)alamin + GMP + H(+). It carries out the reaction alpha-ribazole 5'-phosphate + adenosylcob(III)inamide-GDP = adenosylcob(III)alamin 5'-phosphate + GMP + H(+). It participates in cofactor biosynthesis; adenosylcobalamin biosynthesis; adenosylcobalamin from cob(II)yrinate a,c-diamide: step 7/7. Its function is as follows. Joins adenosylcobinamide-GDP and alpha-ribazole to generate adenosylcobalamin (Ado-cobalamin). Also synthesizes adenosylcobalamin 5'-phosphate from adenosylcobinamide-GDP and alpha-ribazole 5'-phosphate. The chain is Adenosylcobinamide-GDP ribazoletransferase from Escherichia coli (strain ATCC 8739 / DSM 1576 / NBRC 3972 / NCIMB 8545 / WDCM 00012 / Crooks).